The chain runs to 485 residues: tRNA-2-methylthio-N(6)-dimethylallyladenosine synthase (485 aa).

The 118-residue stretch at 37 to 154 folds into the MTTase N-terminal domain; it reads GKLYIKTHGC…LPELIRARRE (118 aa). The [4Fe-4S] cluster site is built by cysteine 46, cysteine 83, cysteine 117, cysteine 191, cysteine 195, and cysteine 198. The 240-residue stretch at 177–416 folds into the Radical SAM core domain; it reads RADGPSAFVS…HINAHAAGIS (240 aa). The region spanning 417-480 is the TRAM domain; the sequence is QRMVGSVQRV…SNSLRGRIQL (64 aa).

The protein belongs to the methylthiotransferase family. MiaB subfamily. In terms of assembly, monomer. Requires [4Fe-4S] cluster as cofactor.

It localises to the cytoplasm. The enzyme catalyses N(6)-dimethylallyladenosine(37) in tRNA + (sulfur carrier)-SH + AH2 + 2 S-adenosyl-L-methionine = 2-methylsulfanyl-N(6)-dimethylallyladenosine(37) in tRNA + (sulfur carrier)-H + 5'-deoxyadenosine + L-methionine + A + S-adenosyl-L-homocysteine + 2 H(+). Functionally, catalyzes the methylthiolation of N6-(dimethylallyl)adenosine (i(6)A), leading to the formation of 2-methylthio-N6-(dimethylallyl)adenosine (ms(2)i(6)A) at position 37 in tRNAs that read codons beginning with uridine. This is tRNA-2-methylthio-N(6)-dimethylallyladenosine synthase from Xanthomonas campestris pv. campestris (strain 8004).